Here is a 722-residue protein sequence, read N- to C-terminus: MLKKSVKIGESELSIEVGRLAKQADGSVVVRYGDTMLLVTAVSAREKKDIDFLPLTVEYQEKLYSAGRIPGSYFKREGRLTEKETLASRLVDRSCRPLFPEGYAYETQIIASVISSDPENEGDIHGITGASAALWVSDIPFDGPIAGIRVGRVGGQLVANPTAKQREQSDLDLVMAVSRKAIVMVEGGAEEVSEADMVAALDFGFTTAQPALDLQDELRRELNKQVRSFEKPAAVDEGLRAKVRELAMDGIKAGYGIKEKGARYEALGKTKKEALAKLKEQLGDGYTPLVEKHAKAVVEDLKYEHMREMTVNGGRIGDRGHDVVRSITCEVGVLPRTHGSAVFTRGETQALVVTTLGTSDDEQRLEMLGGMAFKRFMLHYNFPPFSVNETKPLRGPGRREVGHGALAERALRNMVPKSESFPYTVRLVSDILESNGSSSMASVCGGTLALMDAGVPLKAPVAGIAMGLVKEGDKIAILSDILGDEDHLGDMDFKVCGTSKGITSIQMDIKITGLTTEIMSRALEQARQGRLHILGEMLKTLAESRKEISQYAPRITTIQIRPEFIKNVIGPGGKVIKDIIARTGAAINIEDSGRVDIASANGEAVKAAIAMIQALTREAEIGKIYTGTVRKIAEFGAFVELFPGTDGLIHISELSDKRVKSVSDVLNEGDEVLVKVVSIDKTGKIRLSRKEAMAERAAQQGAAAGEAAAQPAPAPTQPDAKA.

Mg(2+)-binding residues include aspartate 486 and aspartate 492. One can recognise a KH domain in the interval 553-612 (PRITTIQIRPEFIKNVIGPGGKVIKDIIARTGAAINIEDSGRVDIASANGEAVKAAIAMI). The S1 motif domain maps to 622–690 (GKIYTGTVRK…KTGKIRLSRK (69 aa)). The disordered stretch occupies residues 696 to 722 (RAAQQGAAAGEAAAQPAPAPTQPDAKA).

This sequence belongs to the polyribonucleotide nucleotidyltransferase family. The cofactor is Mg(2+).

Its subcellular location is the cytoplasm. The catalysed reaction is RNA(n+1) + phosphate = RNA(n) + a ribonucleoside 5'-diphosphate. Functionally, involved in mRNA degradation. Catalyzes the phosphorolysis of single-stranded polyribonucleotides processively in the 3'- to 5'-direction. The sequence is that of Polyribonucleotide nucleotidyltransferase from Myxococcus xanthus (strain DK1622).